A 242-amino-acid polypeptide reads, in one-letter code: Prosalusin (242 aa).

A signal peptide spans 1-26 (MAAATRGCRPWGSLLGLLGLVSAAAA). A propeptide spanning residues 27–189 (AWDLASLRCT…SSWVVYGTNY (163 aa)) is cleaved from the precursor. 93-100 (GWTGTGKS) serves as a coordination point for ATP. Residue asparagine 149 is glycosylated (N-linked (GlcNAc...) asparagine). Positions 210 to 242 (PPRRSGALPPAPAAPRPALRAQRAGPAGPGAKG) are disordered. The segment covering 225-235 (RPALRAQRAGP) has biased composition (low complexity). Lysine 241 is subject to Lysine amide.

This sequence belongs to the ClpA/ClpB family. Torsin subfamily. Amidation of salusin-alpha(29-Gly) by peptidylglycine alpha-amidating monooxygenase, PAM, converts Lys-241-Gly-242 to Lys-241-NH2 and gives raise to salusin-alpha. As to expression, isoform 4 is ubiquitously expressed, with high level in vascular endothelial cells and vascular smooth muscle cells.

It is found in the secreted. Salusins -alpha and -beta may be endocrine and/or paracrine factors able to increase intracellular calcium concentrations and induce cell mitogenesis. Salusins may also be potent hypotensive peptides. The polypeptide is Prosalusin (TOR2A) (Homo sapiens (Human)).